Consider the following 575-residue polypeptide: Acetylcholine receptor subunit beta-type acr-2 (575 aa).

The N-terminal stretch at 1–20 is a signal peptide; sequence MKKTVKILLILITVFLKVHC. The Extracellular portion of the chain corresponds to 21–270; sequence NGGHDDEAAD…IRRKTLFYTV (250 aa). The tract at residues 31–57 is disordered; sequence FLSHTNIDDPNNSSDPNKNSDQGDTMG. Low complexity predominate over residues 38-50; sequence DDPNNSSDPNKNS. N-linked (GlcNAc...) asparagine glycosylation is found at Asn-41, Asn-42, Asn-80, and Asn-131. The cysteines at positions 185 and 199 are disulfide-linked. The next 3 helical transmembrane spans lie at 271–291, 299–319, and 331–351; these read ILII…YLPV, LTIS…KILP, and LLLA…IVNI. Residues 352–527 are Cytoplasmic-facing; it reads YFRSALSHKM…WKYVAMVLDR (176 aa). Residues 528-548 traverse the membrane as a helical segment; the sequence is LILLIFFGVTLGGTLGIICSA.

It belongs to the ligand-gated ion channel (TC 1.A.9) family. Acetylcholine receptor (TC 1.A.9.1) subfamily. In terms of assembly, component of nicotinic acetylcholine receptor. In cholinergic motoneurons, composed of 2 non-alpha subunits acr-2 and acr-3, and 3 alpha subunits unc-38, unc-63 and acr-12. As to expression, specifically expressed in cholinergic ventral cord motoneurons of the VA, VB, DA and DB classes but not AS and VC classes. Expressed in PVQ and DVC neurons in the tail.

It localises to the postsynaptic cell membrane. It is found in the cell membrane. Functionally, non-alpha subunit of nicotinic acetylcholine receptor (nAChR). Acts in cholinergic motoneurons to regulate presynaptic neurotransmitter release, thereby ensuring normal level of excitation of cholinergic motoneurons during locomotion. In Caenorhabditis elegans, this protein is Acetylcholine receptor subunit beta-type acr-2 (acr-2).